The following is a 44-amino-acid chain: Photosystem I reaction center subunit IX (44 aa).

A helical transmembrane segment spans residues 7–27; it reads YLSVAPVLTTLWFGSLAGLLI.

It belongs to the PsaJ family.

The protein localises to the plastid. It is found in the chloroplast thylakoid membrane. May help in the organization of the PsaE and PsaF subunits. In Drimys granadensis, this protein is Photosystem I reaction center subunit IX.